A 124-amino-acid polypeptide reads, in one-letter code: Protein MGF 110-4L (124 aa).

The signal sequence occupies residues 1-28 (MLVIFLGILGLLANQVLGLPTQAGGHLR). N-linked (GlcNAc...) asparagine; by host glycosylation occurs at N64. Positions 121–124 (KEDL) match the Prevents secretion from ER motif.

It belongs to the asfivirus MGF 110 family.

Its subcellular location is the virion. It is found in the host endoplasmic reticulum-Golgi intermediate compartment. Causes the redistribution of lumenal ER protein to an enlarged ERGIC compartment. This chain is Protein MGF 110-4L, found in Ornithodoros (relapsing fever ticks).